A 309-amino-acid polypeptide reads, in one-letter code: tRNA pseudouridine synthase B (309 aa).

Asp39 (nucleophile) is an active-site residue. Residues 229–306 (LPRVVVHQES…ERVLTLRKVF (78 aa)) form the PUA domain.

It belongs to the pseudouridine synthase TruB family. Type 1 subfamily.

The enzyme catalyses uridine(55) in tRNA = pseudouridine(55) in tRNA. Responsible for synthesis of pseudouridine from uracil-55 in the psi GC loop of transfer RNAs. This is tRNA pseudouridine synthase B from Thermotoga petrophila (strain ATCC BAA-488 / DSM 13995 / JCM 10881 / RKU-1).